Reading from the N-terminus, the 354-residue chain is Serum paraoxonase/lactonase 3 (354 aa).

Cys42 and Cys352 are joined by a disulfide. Asn50 is a glycosylation site (N-linked (GlcNAc...) asparagine). Positions 53 and 54 each coordinate Ca(2+). The active-site Proton acceptor is the His114. Ca(2+) is bound at residue Ile116. At Ser165 the chain carries Phosphoserine. Ca(2+) is bound by residues Asn167, Asn168, Asn223, Asp268, and Asn269. The N-linked (GlcNAc...) asparagine glycan is linked to Asn269.

It belongs to the paraoxonase family. As to quaternary structure, homodimer. The cofactor is Ca(2+). In terms of processing, glycosylated. Post-translationally, the signal sequence is not cleaved.

Its subcellular location is the secreted. It localises to the extracellular space. It catalyses the reaction a phenyl acetate + H2O = a phenol + acetate + H(+). It carries out the reaction An aryl dialkyl phosphate + H2O = dialkyl phosphate + an aryl alcohol.. The catalysed reaction is an N-acyl-L-homoserine lactone + H2O = an N-acyl-L-homoserine + H(+). Has low activity towards the organophosphate paraxon and aromatic carboxylic acid esters. Rapidly hydrolyzes lactones such as statin prodrugs (e.g. lovastatin). Hydrolyzes aromatic lactones and 5- or 6-member ring lactones with aliphatic substituents but not simple lactones or those with polar substituents. The sequence is that of Serum paraoxonase/lactonase 3 (PON3) from Oryctolagus cuniculus (Rabbit).